The primary structure comprises 241 residues: MLFKSLLLLSVYAVTCYGQSKVPVYVYYESLCPDSARFINEQLYPVAKELKKNLELHLVPFGKSSYTTQGSDVMFTCHHGENECYGNKVHACAIQHIQGNSYQPNISKEDLTLDYVNCLMHRAQLKDGAFPTKRCADEVKIDQWQAIMDCANSTEGSQLLKQHGDVTNKLQSPLKSVPTVAFKQTYDDELQKLSVSSFRHALCKNLSPQPVECLDLPSTGSAISSLGMIVTVVAVLISRLL.

The N-terminal stretch at 1–18 is a signal peptide; the sequence is MLFKSLLLLSVYAVTCYG. 2 N-linked (GlcNAc...) asparagine glycosylation sites follow: Asn105 and Asn152. Residues 218–235 traverse the membrane as a helical segment; it reads STGSAISSLGMIVTVVAV.

It belongs to the GILT family. In terms of tissue distribution, salivary gland (at protein level). Low-level expression in midgut (at protein level). Expressed in head and leg tissues. Ovary. Fat body. As to expression, (Microbial infection) Detected with Plasmodium berghei sporozoites isolated from the saliva of infected Anopheles gambiae mosquitoes (at protein level).

It is found in the membrane. Functionally, required for normal development of ovary and testis. In terms of biological role, (Microbial infection) Interacts with the surface of Plasmodium berghei sporozoites. Reduces P.berghei sporozoite cell traversal activity and transmission. Limits the motility of P.berghei sporozoites. Decreases the levels of host liver infection by P.berghei sporozoites. Does not affect P.berghei sporozoite viability. Indirectly promotes P.berghei survival in mosquitoes by influencing ovarian development and the subsequent production of 20-hydroxyecdysone and vitellogenin, which, in turn, modulates TEP1-dependent parasite killing. Promotes P.berghei infection in mosquitoes, most likely impacting the oocyst stage of parasite development. (Microbial infection) Promotes Plasmodium falciparum survival in mosquitoes. This is Gamma-interferon-inducible lysosomal thiol reductase-like protein from Anopheles gambiae (African malaria mosquito).